The sequence spans 214 residues: ATP-dependent Clp protease proteolytic subunit (214 aa).

Ser113 serves as the catalytic Nucleophile. Residue His138 is part of the active site.

This sequence belongs to the peptidase S14 family. Fourteen ClpP subunits assemble into 2 heptameric rings which stack back to back to give a disk-like structure with a central cavity, resembling the structure of eukaryotic proteasomes.

The protein localises to the cytoplasm. It carries out the reaction Hydrolysis of proteins to small peptides in the presence of ATP and magnesium. alpha-casein is the usual test substrate. In the absence of ATP, only oligopeptides shorter than five residues are hydrolyzed (such as succinyl-Leu-Tyr-|-NHMec, and Leu-Tyr-Leu-|-Tyr-Trp, in which cleavage of the -Tyr-|-Leu- and -Tyr-|-Trp bonds also occurs).. Functionally, cleaves peptides in various proteins in a process that requires ATP hydrolysis. Has a chymotrypsin-like activity. Plays a major role in the degradation of misfolded proteins. The chain is ATP-dependent Clp protease proteolytic subunit from Alkalilimnicola ehrlichii (strain ATCC BAA-1101 / DSM 17681 / MLHE-1).